Here is a 311-residue protein sequence, read N- to C-terminus: Porphobilinogen deaminase (311 aa).

The residue at position 241 (C241) is an S-(dipyrrolylmethanemethyl)cysteine.

This sequence belongs to the HMBS family. As to quaternary structure, monomer. Dipyrromethane serves as cofactor.

It catalyses the reaction 4 porphobilinogen + H2O = hydroxymethylbilane + 4 NH4(+). Its pathway is porphyrin-containing compound metabolism; protoporphyrin-IX biosynthesis; coproporphyrinogen-III from 5-aminolevulinate: step 2/4. Tetrapolymerization of the monopyrrole PBG into the hydroxymethylbilane pre-uroporphyrinogen in several discrete steps. The sequence is that of Porphobilinogen deaminase (hemC) from Halalkalibacterium halodurans (strain ATCC BAA-125 / DSM 18197 / FERM 7344 / JCM 9153 / C-125) (Bacillus halodurans).